We begin with the raw amino-acid sequence, 592 residues long: NADH-quinone oxidoreductase subunit C/D (592 aa).

The interval 1–183 is NADH dehydrogenase I subunit C; sequence MLTEFNSIPA…GPYILTEEKE (183 aa). The interval 207-592 is NADH dehydrogenase I subunit D; sequence DFMFLNLGPN…IDFVMADVDR (386 aa).

In the N-terminal section; belongs to the complex I 30 kDa subunit family. The protein in the C-terminal section; belongs to the complex I 49 kDa subunit family. NDH-1 is composed of 13 different subunits. Subunits NuoB, CD, E, F, and G constitute the peripheral sector of the complex.

Its subcellular location is the cell inner membrane. It carries out the reaction a quinone + NADH + 5 H(+)(in) = a quinol + NAD(+) + 4 H(+)(out). In terms of biological role, NDH-1 shuttles electrons from NADH, via FMN and iron-sulfur (Fe-S) centers, to quinones in the respiratory chain. The immediate electron acceptor for the enzyme in this species is believed to be ubiquinone. Couples the redox reaction to proton translocation (for every two electrons transferred, four hydrogen ions are translocated across the cytoplasmic membrane), and thus conserves the redox energy in a proton gradient. This Acidiphilium cryptum (strain JF-5) protein is NADH-quinone oxidoreductase subunit C/D.